The sequence spans 474 residues: Dol-P-Glc:Glc(2)Man(9)GlcNAc(2)-PP-Dol alpha-1,2-glucosyltransferase (474 aa).

Residues 1–6 (MAQLEG) lie on the Cytoplasmic side of the membrane. The helical transmembrane segment at 7–27 (YYFSAALSCTFLVSCLLFSAF) threads the bilayer. At 28 to 64 (SRALREPYMDEIFHLPQAQRYCEGRFSLSQWDPMITT) the chain is on the extracellular side. A helical transmembrane segment spans residues 65–85 (LPGLYLVSVGVVKPASWILGW). The Cytoplasmic portion of the chain corresponds to 86–97 (SEHVVCSIGMLR). A helical membrane pass occupies residues 98 to 118 (FVNLLFSVGNFYLLYLLFRKI). Residues 119 to 126 (QPRNKASS) are Extracellular-facing. A helical transmembrane segment spans residues 127–147 (SIQRILSTLTLAVFPTLYFFN). The Cytoplasmic portion of the chain corresponds to 148-150 (FLY). The helical transmembrane segment at 151 to 171 (YTEAGSVFFTLFAYLMCLYGN) threads the bilayer. Topologically, residues 172–175 (HRTS) are extracellular. A helical transmembrane segment spans residues 176–196 (ALLGFCGFMFRQTNIIWAAFC). Residues 197 to 256 (AGHIIAQKCSEAWKTELQKKKEERLPPAKGPLSELRRVLQFLLMYSMSLKNLSMLFLLTW) lie on the Cytoplasmic side of the membrane. A helical membrane pass occupies residues 257-277 (PYMLLLLAFFVFVVVNGGIVV). Residues 278–283 (GDRSSH) lie on the Extracellular side of the membrane. A helical transmembrane segment spans residues 284-304 (EACLHFPQLFYFFSFTAFFSF). Topologically, residues 305-317 (PHLLSPTKVKTFL) are cytoplasmic. A helical membrane pass occupies residues 318–338 (SLVWKRRVQFSVITLVSVFLV). The Extracellular segment spans residues 339 to 365 (WKFTYVHKYLLADNRHYTFYVWKRVFQ). The chain crosses the membrane as a helical span at residues 366-386 (RHEIVKYLLVPAYMFAGWAVA). At 387–392 (DSLKSK) the chain is on the cytoplasmic side. Residues 393–413 (SIFWNLMFFVCLVASTVPQKL) traverse the membrane as a helical segment. Residues 414–436 (LEFRYFILPYIIYRLNMPLPPIS) are Extracellular-facing. Residues 437–457 (RLVCELGCYAVVNFLTFYIFL) traverse the membrane as a helical segment. Over 458-473 (NKTFQWSDSHDIQRFM) the chain is Cytoplasmic.

The protein belongs to the ALG10 glucosyltransferase family. As to quaternary structure, interacts with KCNH1; may regulate KCNH1, possibly by regulating its N-glycosylation. Interacts with KCNH2; may reduce KCNH2 sensitivity to classic proarrhythmic drug blockade, possibly by regulating its N-glycosylation. As to expression, highly expressed in brain, skeletal muscle, uterus, small intestine and liver. Moderately expressed in lung and kidney. Weakly expressed in heart and stomach.

It is found in the endoplasmic reticulum membrane. The enzyme catalyses an alpha-D-Glc-(1-&gt;3)-alpha-D-Glc-(1-&gt;3)-alpha-D-Man-(1-&gt;2)-alpha-D-Man-(1-&gt;2)-alpha-D-Man-(1-&gt;3)-[alpha-D-Man-(1-&gt;2)-alpha-D-Man-(1-&gt;3)-[alpha-D-Man-(1-&gt;2)-alpha-D-Man-(1-&gt;6)]-alpha-D-Man-(1-&gt;6)]-beta-D-Man-(1-&gt;4)-beta-D-GlcNAc-(1-&gt;4)-alpha-D-GlcNAc-diphospho-di-trans,poly-cis-dolichol + a di-trans,poly-cis-dolichyl beta-D-glucosyl phosphate = a alpha-D-Glc-(1-&gt;2)-alpha-D-Glc-(1-&gt;3)-alpha-D-Glc-(1-&gt;3)-alpha-D-Man-(1-&gt;2)-alpha-D-Man-(1-&gt;2)-alpha-D-Man-(1-&gt;3)-[alpha-D-Man-(1-&gt;2)-alpha-D-Man-(1-&gt;3)-[alpha-D-Man-(1-&gt;2)-alpha-D-Man-(1-&gt;6)]-alpha-D-Man-(1-&gt;6)]-beta-D-Man-(1-&gt;4)-beta-D-GlcNAc-(1-&gt;4)-alpha-D-GlcNAc-diphospho-di-trans,poly-cis-dolichol + a di-trans,poly-cis-dolichyl phosphate + H(+). It functions in the pathway protein modification; protein glycosylation. Its function is as follows. Dol-P-Glc:Glc(2)Man(9)GlcNAc(2)-PP-Dol alpha-1,2-glucosyltransferase that operates in the biosynthetic pathway of dolichol-linked oligosaccharides, the glycan precursors employed in protein asparagine (N)-glycosylation. The assembly of dolichol-linked oligosaccharides begins on the cytosolic side of the endoplasmic reticulum membrane and finishes in its lumen. The sequential addition of sugars to dolichol pyrophosphate produces dolichol-linked oligosaccharides containing fourteen sugars, including two GlcNAcs, nine mannoses and three glucoses. Once assembled, the oligosaccharide is transferred from the lipid to nascent proteins by oligosaccharyltransferases. In the lumen of the endoplasmic reticulum, adds the third and last glucose residue from dolichyl phosphate glucose (Dol-P-Glc) onto the lipid-linked oligosaccharide intermediate Glc(2)Man(9)GlcNAc(2)-PP-Dol to produce Glc(3)Man(9)GlcNAc(2)-PP-Dol. The polypeptide is Dol-P-Glc:Glc(2)Man(9)GlcNAc(2)-PP-Dol alpha-1,2-glucosyltransferase (Rattus norvegicus (Rat)).